A 632-amino-acid polypeptide reads, in one-letter code: tRNA uridine 5-carboxymethylaminomethyl modification enzyme MnmG (632 aa).

Residues 15 to 20, Val-127, and Ser-182 contribute to the FAD site; that span reads GAGHAG. Position 276-290 (276-290) interacts with NAD(+); the sequence is GARYCPSIEDKIVRF. Residue Gln-373 participates in FAD binding.

The protein belongs to the MnmG family. In terms of assembly, homodimer. Heterotetramer of two MnmE and two MnmG subunits. FAD serves as cofactor.

It is found in the cytoplasm. NAD-binding protein involved in the addition of a carboxymethylaminomethyl (cmnm) group at the wobble position (U34) of certain tRNAs, forming tRNA-cmnm(5)s(2)U34. The sequence is that of tRNA uridine 5-carboxymethylaminomethyl modification enzyme MnmG from Enterococcus faecalis (strain ATCC 700802 / V583).